Consider the following 587-residue polypeptide: Mitogen-activated protein kinase 4 (587 aa).

One can recognise a Protein kinase domain in the interval 20–312 (FVDFQPLGFG…AEMGLQHPYM (293 aa)). Residues 26 to 34 (LGFGVNGLV) and Lys-49 contribute to the ATP site. The active-site Proton acceptor is the Asp-149. Ser-186 bears the Phosphoserine; by PAK1, PAK2 and PAK3 mark. The SEG motif signature appears at 186–188 (SEG). Positions 328–333 (FRIEDE) match the FRIEDE motif motif. 2 stretches are compositionally biased toward basic and acidic residues: residues 373-383 (QDASEVQRDPR) and 395-413 (VDPR…EQSH). The segment at 373-413 (QDASEVQRDPRAGSAPLAEDVQVDPRKDSHSSSERFLEQSH) is disordered. Ser-434 carries the phosphoserine modification. The segment at 499–534 (STQGGPEHASPPADDPERRLSASPPGRPAPVDGGAS) is disordered.

Belongs to the protein kinase superfamily. CMGC Ser/Thr protein kinase family. MAP kinase subfamily. In terms of assembly, homodimer. Heterodimer with ERK3/MAPK6. Interacts with (via FRIEDE motif) MAPKAPK5. Mg(2+) serves as cofactor. Post-translationally, phosphorylated at Ser-186 by PAK1, PAK2 and PAK3 resulting in catalytic activation. Phosphorylated by MAPKAPK5 at other sites. As to expression, high expression in heart and brain.

The protein localises to the cytoplasm. It localises to the nucleus. The enzyme catalyses L-seryl-[protein] + ATP = O-phospho-L-seryl-[protein] + ADP + H(+). It carries out the reaction L-threonyl-[protein] + ATP = O-phospho-L-threonyl-[protein] + ADP + H(+). With respect to regulation, activated by phosphorylation at Ser-186. Functionally, atypical MAPK protein. Phosphorylates microtubule-associated protein 2 (MAP2) and MAPKAPK5. The precise role of the complex formed with MAPKAPK5 is still unclear, but the complex follows a complex set of phosphorylation events: upon interaction with atypical MAPKAPK5, ERK4/MAPK4 is phosphorylated at Ser-186 and then mediates phosphorylation and activation of MAPKAPK5, which in turn phosphorylates ERK4/MAPK4. May promote entry in the cell cycle. The chain is Mitogen-activated protein kinase 4 (MAPK4) from Homo sapiens (Human).